The following is a 680-amino-acid chain: SH3 domain-binding protein 1 (680 aa).

The span at 1–11 shows a compositional bias: basic residues; it reads MMKRQLHRMRQ. 2 disordered regions span residues 1–24 and 160–184; these read MMKRQLHRMRQLAHTGSSGRTPET and SQAAKNSGSNQGLGGASGSHTHTTT. The segment at 1-275 is interaction with CGNL1; sequence MMKRQLHRMR…TAAPFSRVYG (275 aa). Residues 81–262 form the BAR domain; that stretch reads MAESFKELDP…RDNHSQADHS (182 aa). The span at 160 to 169 shows a compositional bias: polar residues; it reads SQAAKNSGSN. A phosphoserine mark is found at Ser-241 and Ser-262. Positions 276-469 constitute a Rho-GAP domain; that stretch reads VSLRTHLQDL…ALIQNADTLF (194 aa). The tract at residues 470–680 is interaction with CD2AP; it reads PGDINFNVSG…RPRGLISETE (211 aa). A disordered region spans residues 488-680; sequence EKVSSQQVSE…RPRGLISETE (193 aa). Positions 502-516 are enriched in pro residues; sequence VTVPAPATTPAPTPA. Residue Ser-535 is modified to Phosphoserine. The span at 536 to 546 shows a compositional bias: polar residues; the sequence is PKVSRNPTETA. Over residues 561-571 the composition is skewed to pro residues; it reads PARPTMPPPQP. Ser-582 carries the post-translational modification Phosphoserine. Thr-592 carries the post-translational modification Phosphothreonine. The SH3-binding motif lies at 607–616; it reads APTMPPPLPP. The span at 609–621 shows a compositional bias: pro residues; the sequence is TMPPPLPPVPPQP. At Ser-632 the chain carries Phosphoserine. Positions 660–671 are enriched in pro residues; sequence HPPPPALPPQPR.

In terms of assembly, interacts with RAC1. Interacts with the exocyst via EXOC4 and EXOC8; required for the localization of both SH3BP1 and the exocyst to the leading edge of migrating cells. Interacts with CD2AP and CGNL1; probably part of a complex at cell junctions. Interacts with CAPZA1; recruits CAPZA1 to forming cell junctions. May interact with AFDN. Interacts with PLXND1; they dissociate upon SEMA3E binding to PLXND1 allowing SH3BP1 to transduce downstream signal through RAC1 inactivation. Interacts with ABL1, GRB2 and SRC (via SH3 domain). As to expression, expressed in all tissues examined. Highest levels found in spleen and brain, lowest in heart and liver.

The protein resides in the cell projection. It localises to the cell junction. The protein localises to the tight junction. It is found in the adherens junction. Its subcellular location is the phagocytic cup. The protein resides in the nucleus. It localises to the cytoplasm. The protein localises to the cytosol. Its function is as follows. GTPase activating protein (GAP) which specifically converts GTP-bound Rho-type GTPases including RAC1 and CDC42 in their inactive GDP-bound form. By specifically inactivating RAC1 at the leading edge of migrating cells, it regulates the spatiotemporal organization of cell protrusions which is important for proper cell migration. Also negatively regulates CDC42 in the process of actin remodeling and the formation of epithelial cell junctions. Through its GAP activity toward RAC1 and/or CDC42 plays a specific role in phagocytosis of large particles. Specifically recruited by a PI3 kinase/PI3K-dependent mechanism to sites of large particles engagement, inactivates RAC1 and/or CDC42 allowing the reorganization of the underlying actin cytoskeleton required for engulfment. It also plays a role in angiogenesis and the process of repulsive guidance as part of a semaphorin-plexin signaling pathway. Following the binding of PLXND1 to extracellular SEMA3E it dissociates from PLXND1 and inactivates RAC1, inducing the intracellular reorganization of the actin cytoskeleton and the collapse of cells. The sequence is that of SH3 domain-binding protein 1 from Mus musculus (Mouse).